A 154-amino-acid polypeptide reads, in one-letter code: uncharacterized protein (154 aa).

5 consecutive transmembrane segments (helical) span residues 5–24, 29–48, 53–75, 87–109, and 124–146; these read TLII…GVLL, FYAA…IYAA, PVVV…AIAA, IFWV…SMAV, and ATDY…LSAI.

It localises to the cell membrane. This is an uncharacterized protein from Archaeoglobus fulgidus (strain ATCC 49558 / DSM 4304 / JCM 9628 / NBRC 100126 / VC-16).